The sequence spans 95 residues: Small ribosomal subunit protein uS17 (95 aa).

It belongs to the universal ribosomal protein uS17 family. As to quaternary structure, part of the 30S ribosomal subunit.

In terms of biological role, one of the primary rRNA binding proteins, it binds specifically to the 5'-end of 16S ribosomal RNA. In Synechococcus sp. (strain CC9902), this protein is Small ribosomal subunit protein uS17.